Reading from the N-terminus, the 283-residue chain is Phosphatidylglycerol--prolipoprotein diacylglyceryl transferase (283 aa).

7 helical membrane-spanning segments follow: residues 18–38 (LFGHPIVWYGLLFALGLIILG), 59–79 (LAVYVFVGTIVGARLGHVLFY), 91–111 (IFVTWEGGLASHGGTIGIIIA), 124–144 (ILWVLDRLAVPTGIVAAMIRL), 185–205 (TQIYEALCYLAVFALCMWLYW), 213–233 (YSGLIVGVFLTGIFLSRFIIE), and 251–271 (GLNMGQLLSIPFVLAGIWLII). An a 1,2-diacyl-sn-glycero-3-phospho-(1'-sn-glycerol)-binding site is contributed by R143.

It belongs to the Lgt family.

The protein resides in the cell inner membrane. It catalyses the reaction L-cysteinyl-[prolipoprotein] + a 1,2-diacyl-sn-glycero-3-phospho-(1'-sn-glycerol) = an S-1,2-diacyl-sn-glyceryl-L-cysteinyl-[prolipoprotein] + sn-glycerol 1-phosphate + H(+). It functions in the pathway protein modification; lipoprotein biosynthesis (diacylglyceryl transfer). In terms of biological role, catalyzes the transfer of the diacylglyceryl group from phosphatidylglycerol to the sulfhydryl group of the N-terminal cysteine of a prolipoprotein, the first step in the formation of mature lipoproteins. The polypeptide is Phosphatidylglycerol--prolipoprotein diacylglyceryl transferase (Porphyromonas gingivalis (strain ATCC 33277 / DSM 20709 / CIP 103683 / JCM 12257 / NCTC 11834 / 2561)).